The following is an 884-amino-acid chain: Schlafen family member 5 (884 aa).

574–581 (GLPGSGKT) is a binding site for ATP.

The protein belongs to the Schlafen family. Subgroup III subfamily.

Its function is as follows. May have a role in hematopoietic cell differentiation. The protein is Schlafen family member 5 (Slfn5) of Mus musculus (Mouse).